The sequence spans 2224 residues: MVKSLVAKLSTASSNLSLASTFGGGSGAAEETNYAKHRNDPGRFFGDGVQFKAKLIGILEVGEARGDRMCQEALQDLKMAIRAAGEHKQRITIHVTIDGLRLRDEKTGDSLYHHPVHKISFIAQDMTDSRAFGYIFGSPDSGHRFFGIKTDKAASQVVLAMRDLFQVVFELKKKEIEMARQQIQGKSLHDHSSQLASLSSLKSSGLGGMGLGHSDLASGGISSGHALTLLGSSLSTTNGTSRLGVSLDVAKASGSAAKEVSPESVADLVDLEQELTSLQRGISQMERITPNEPTTSSTGGAGHPSLAKSASEDDPFGDSFIYVPSYSILPPPPDSGRNRHKPPNKTPDAVTSLDAMLSPPPGTSSSHGSASAGLQAADNDDDNWLQELDQQNDVFDTSKVVSSSGLGSVLAMAPLASSESTATPTQQLTEVAAGSGPLADLDIGLSTALGNEEQTSTILSLDAFTDLDPLGTGRTRPYVDKKYFFQELKNPPKKLLKELSSGSQAGLGLGLSLGQLDGLFPEDSTTISTTTTTATNITAGNPQQNSANTLTSTASTAASLGQLLSTVALNPDPLPAPISIPTSISHSITPSAELKLLLGHVTNPPNPTGHYYTTEPPTLNSLENPHPPADPVLLPRDTDPFSPTRKKSDPDPFQESDLFAKLDAFEFEAPPAVPAPSIPNLATETKANVFNGPLQVQLPPEKELQLQQPPSTVRNRPTASVSALPSGGALDVISSISNKKMPHLFGQARSFGKSGSDIGSSVNMRRLQESDSLSETEAAPEPPPRPDSTPYSEPPPLPPKKQFSDLVIRPSPANTTQPPTSGRYEYLNSNVTARRTASSVDAPPIPLPSRRVGRSDGCFPGPGRPRKPGHTEDDYLAPLGAPPPLLPPPSQGSSARARPQRQASLGRPQDIYENKAEILQAQAQAQAQAPEVAPSSNTLAPDITLTQLLTLGMDDLAIKLNVPASKLSTMTLVQLTAYLSEYLSSEKSQVHSQERRSSPANTAPAPASTAAVFKVNFDQQTSFVAKFDDTFGEDEPVMPSGSSDSTFVANFANFNDAPTPVPTVSPVVATVPSADRYAVFREIIDQELQQQQQETDLMGDLTPPPVDETQAKEISEGLEVNNVGAELPIDALDVKPAPKIDTKITEVVAQAKDRYAALRDIILVENLFDKPAIATDTQPEKEKDLLQDFPEFSDEFNEDHDLRQIMDHQNVQTHARDRHGLVDSRGFPTEPSSSALTVGDYDEDEDADAGGESSLDSNEKDAEPVSGQDQYEKLSTSTQQLDAAAPALEDVQQLQQQSLPPKQDQKFLSILTAPGGGTKDDIEIDELMHRAISNLSLDSRDRVSPATSSAAPSRGAPGLHTPSQFNDVSTSPIPLQKPGMGPSPVPSQLSAVSQLIDTATKQMMGDKDREKQSWATFDSPKAKGKARLTLPPPPPPASNTSQPDTVESPCSSDPRDDGWSKQQRRWAKKERQQTSSSSRDLSPWDDETPEYLKRRQLAAAQMAHPHQPPMQAPPQHTDRHGYYMRHARRMNSCDEDYDYDGEFVARRDQPQHQQQQRKFKHGLSRSRDNFELESPSWYHHPAHHTWSPQEIEQVRVRSFDRTAYERSSYGPPPPIYDKRGQLRGKYRGDHRDRERERDRDREYRDYARPSYDFDYENVYEERGGRSPLAYKPGRGGGDYLYDRERDRDRERDRKSFDRESLESYESATRRRRSFGSGNDVYGSLDSRDDYRGDRERDRERDREQMKTRSLRKPTTTSGKLRISGDIDYEQDSEQDFQQRSGVRSLQRPNQLGGDVVLPSNAVVGPQRLRKSSGSSPWDGEEPALPGQKSWKRPASAAETERRLAESRRAVALGQTPSDGEKERRFRKKTRARSAKDLATVGAPSASTSAPSRSSYGRGIRDNYDYICPGQRNDDDDDDDEDYVDDEPPTDEDKFERLNRRRHEMHQRMLESERRQMERHQPPSLAKLPGQNRTRGVVANSDYGFVDSYEQTPTPTPRSNASSTGPGGLMMSGGESSAGVTSSKFNFDDGFESDFNQSSPPPAPAGTASSCNSTPAGPVSANANNGGSKSLFRFSNDFSDREKREQFEMDTPPTSTPPITQKLRFDDNVKVSQFDDAAFEDDFAKASFDFEKEQAGSATAGAGGSGAMSRKQNMRTSKLQQRQELIKKSESVNIFAKKQEDPFEDDEFFKSPDQEQAMDQHNDDTEGGKFQWSEDANFAKFDENM.

The region spanning 45 to 197 (FGDGVQFKAK…LHDHSSQLAS (153 aa)) is the PID domain. Tyr-112 carries the phosphotyrosine; by ABL modification. The interval 281 to 377 (GISQMERITP…GSASAGLQAA (97 aa)) is disordered. Low complexity predominate over residues 363 to 377 (TSSSHGSASAGLQAA). Tyr-483 is modified (phosphotyrosine; by ABL). Disordered stretches follow at residues 607-654 (PTGH…DPFQ), 704-724 (LQLQ…VSAL), and 766-906 (RLQE…ASLG). Polar residues predominate over residues 711–723 (STVRNRPTASVSA). Over residues 780-799 (PEPPPRPDSTPYSEPPPLPP) the composition is skewed to pro residues. Over residues 827 to 839 (LNSNVTARRTASS) the composition is skewed to polar residues. The span at 880-890 (GAPPPLLPPPS) shows a compositional bias: pro residues. Ser-998 carries the phosphoserine modification. 6 disordered regions span residues 1212–1321 (QTHA…TKDD), 1334–1519 (NLSL…HTDR), 1545–1566 (ARRD…LSRS), 1603–2100 (AYER…PITQ), 2134–2164 (AGSA…RQEL), and 2177–2224 (KQED…DENM). The span at 1240-1249 (DYDEDEDADA) shows a compositional bias: acidic residues. Positions 1267–1281 (GQDQYEKLSTSTQQL) are enriched in polar residues. The span at 1292 to 1302 (QQLQQQSLPPK) shows a compositional bias: low complexity. Residues Ser-1336, Ser-1339, Ser-1344, and Ser-1348 each carry the phosphoserine modification. Composition is skewed to polar residues over residues 1361–1373 (TPSQ…TSPI), 1386–1401 (PSQL…TATK), and 1438–1451 (SNTS…SPCS). Over residues 1555–1564 (QQRKFKHGLS) the composition is skewed to basic residues. A phosphotyrosine; by ABL mark is found at Tyr-1604 and Tyr-1609. A compositionally biased stretch (basic and acidic residues) spans 1616–1647 (YDKRGQLRGKYRGDHRDRERERDRDREYRDYA). The stretch at 1631 to 1642 (RDRERERDRDRE) is one Alternate Arg and acidic residues repeat. The interval 1631–1743 (RDRERERDRD…RERDRERDRE (113 aa)) is repeat-rich region. Tyr-1643, Tyr-1646, Tyr-1655, and Tyr-1681 each carry phosphotyrosine; by ABL. Over residues 1680 to 1701 (LYDRERDRDRERDRKSFDRESL) the composition is skewed to basic and acidic residues. The stretch at 1682–1692 (DRERDRDRERD) is one Alternate Arg and acidic residues repeat. Residues Ser-1700, Ser-1713, and Ser-1716 each carry the phosphoserine modification. A compositionally biased stretch (basic and acidic residues) spans 1725–1746 (DSRDDYRGDRERDRERDREQMK). Residues 1733-1743 (DRERDRERDRE) form an Alternate Arg and acidic residues repeat. Tyr-1768 bears the Phosphotyrosine; by ABL mark. The span at 1775–1789 (DFQQRSGVRSLQRPN) shows a compositional bias: polar residues. 4 positions are modified to phosphoserine: Ser-1811, Ser-1812, Ser-1814, and Ser-1815. Residues 1838–1848 (ETERRLAESRR) are compositionally biased toward basic and acidic residues. Over residues 1882–1894 (APSASTSAPSRSS) the composition is skewed to low complexity. A Phosphotyrosine; by ABL modification is found at Tyr-1905. Over residues 1913–1929 (DDDDDDDEDYVDDEPPT) the composition is skewed to acidic residues. Residues 1945–1960 (HQRMLESERRQMERHQ) are compositionally biased toward basic and acidic residues. Polar residues-rich tracts occupy residues 1988 to 2003 (YEQT…ASST), 2013 to 2024 (GESSAGVTSSKF), and 2050 to 2067 (CNST…NGGS). Ser-2074 bears the Phosphoserine mark. Over residues 2077–2086 (FSDREKREQF) the composition is skewed to basic and acidic residues. Residues 2149–2162 (RKQNMRTSKLQQRQ) are compositionally biased toward polar residues. Over residues 2187-2206 (FFKSPDQEQAMDQHNDDTEG) the composition is skewed to basic and acidic residues.

In terms of assembly, binds the SH3 domains of drk via the Pro-rich domain. When phosphorylated, can interact with the SH2 domains of drk. Binds sev via the phosphotyrosine interaction domain (PID). Probably phosphorylated by the Abl tyrosine kinase. Phosphorylated on tyrosine residues in response to sevenless activation. Uniformly expressed in the embryo from blastoderm through gastrulation. Highly expressed in the mesoderm and CNS during germ-band retraction. CNS expression is later localized to axon bundles. Detected in the embryonic PNS and body wall muscles. Expressed in the eye at the morphogenetic furrow and in developing photoreceptor cells posterior to the furrow.

The protein resides in the cytoplasm. Functionally, together with Abl, involved in embryonic neural development. May have a role in eye development. Acts as an adapter protein for SH2-domain containing proteins during sevenless (sev) signaling. The polypeptide is Protein disabled (Dab) (Drosophila melanogaster (Fruit fly)).